The chain runs to 241 residues: MNSGRPETMENLPALYTIFQGEVAMVTDYGAFIKIPGCRKQGLVHRTHMSSCRVDKPSEIVDVGDKVWVKLIGREMKNDRIKVSLSMKVVNQGTGKDLDPNNVVIEQEERRRRSFQDYTGQKITLEAVLNTTCKKCGCKGHFAKDCFMQPGGTKYSLIPEEEEEKEEAKAEGLEKPDPTKNSSRKRKKEKKKKKHRDRKSSDCDSSDSESDTGKKARHSSKDSKATKKKKKKKKHKKKHKE.

The S1 motif domain occupies 16–88; the sequence is YTIFQGEVAM…DRIKVSLSMK (73 aa). S114 is subject to Phosphoserine. A CCHC-type zinc finger spans residues 131 to 148; sequence TTCKKCGCKGHFAKDCFM. Position 144 is an N6-acetyllysine (K144). Residues 160–241 are disordered; that stretch reads EEEEEKEEAK…KKKHKKKHKE (82 aa). Residues 166–178 are compositionally biased toward basic and acidic residues; sequence EEAKAEGLEKPDP. A compositionally biased stretch (basic residues) spans 182–198; that stretch reads SSRKRKKEKKKKKHRDR. S183 is modified (phosphoserine). The segment covering 211 to 225 has biased composition (basic and acidic residues); sequence DTGKKARHSSKDSKA. A compositionally biased stretch (basic residues) spans 226 to 241; the sequence is TKKKKKKKKHKKKHKE.

As to quaternary structure, interacts with PNN. Associates with the 60S ribosomal subunit. Expressed in liver, brain, heart, kidney testis, stomach, small intestine, skin, thymus, uterus, placenta, spleen, lung and skeletal muscle.

Its subcellular location is the nucleus. It localises to the nucleolus. The polypeptide is Zinc finger CCHC domain-containing protein 17 (Zcchc17) (Mus musculus (Mouse)).